The following is a 143-amino-acid chain: Cytotoxic L-amino-acid oxidase (143 aa).

It belongs to the flavin monoamine oxidase family. The cofactor is FAD.

It catalyses the reaction an L-alpha-amino acid + O2 + H2O = a 2-oxocarboxylate + H2O2 + NH4(+). Cytotoxic L-amino acid oxidase with high oxidase activity towards DL-methionine and L-methionine, L-phenylalanine, DL-norleucine, L-isoleucine, L-arginine, L-tyrosine, and DL-leucine. Shows relatively low activity towards DL-lysine and L-lysine, DL-asparagine, DL-valine, L-histidine, DL-threonine, DL-tryptophan, and L-glutamic acid; and no activity towards L-cysteine, L-glycine, L-proline, L-oxyproline, DL-serine, and DL-aspartic acid. Does not use benzylamine, ethanolamine, diethylamine, meta- and para-phenylendiamine, ortho-, meta- and para-aminophenols, or putrescin as a substrate. Acts as a toxin by inducing chromatin condensation, as well as DNA and nucleus fragmentation, which are typical for apoptosis. Probably induces cell damage indirectly via the generation of free radicals and oxidant agents that can trigger cell impairment and apoptosis by a caspase-independent pathway. The protein is Cytotoxic L-amino-acid oxidase of Amanita phalloides (Death cap).